The primary structure comprises 418 residues: Phosphoglycerate kinase (418 aa).

Residues 18 to 20 (DFN), arginine 34, 57 to 60 (HLGR), arginine 115, and arginine 171 each bind substrate. ATP is bound by residues lysine 224, glycine 315, glutamate 346, and 375 to 378 (GGDS).

The protein belongs to the phosphoglycerate kinase family. In terms of assembly, monomer.

The protein localises to the cytoplasm. It catalyses the reaction (2R)-3-phosphoglycerate + ATP = (2R)-3-phospho-glyceroyl phosphate + ADP. The protein operates within carbohydrate degradation; glycolysis; pyruvate from D-glyceraldehyde 3-phosphate: step 2/5. The polypeptide is Phosphoglycerate kinase (Porphyromonas gingivalis (strain ATCC BAA-308 / W83)).